Here is a 206-residue protein sequence, read N- to C-terminus: GDT1-like protein sll0615 (206 aa).

5 helical membrane passes run W36–G56, I58–F78, I114–W134, A151–M171, and V185–I205.

Belongs to the GDT1 family.

The protein localises to the cell membrane. The sequence is that of GDT1-like protein sll0615 from Synechocystis sp. (strain ATCC 27184 / PCC 6803 / Kazusa).